The following is a 112-amino-acid chain: Integration host factor subunit alpha (112 aa).

It belongs to the bacterial histone-like protein family. Heterodimer of an alpha and a beta chain.

Functionally, this protein is one of the two subunits of integration host factor, a specific DNA-binding protein that functions in genetic recombination as well as in transcriptional and translational control. The sequence is that of Integration host factor subunit alpha from Sinorhizobium medicae (strain WSM419) (Ensifer medicae).